Reading from the N-terminus, the 542-residue chain is CTP synthase (542 aa).

The segment at 1–265 (MARYVFITGG…DDEVLAAFGI (265 aa)) is amidoligase domain. A CTP-binding site is contributed by Ser13. Residue Ser13 coordinates UTP. ATP-binding positions include 14–19 (SLGKGI) and Asp71. Asp71 and Glu139 together coordinate Mg(2+). CTP-binding positions include 146–148 (DIE), 186–191 (KTKPTQ), and Lys222. Residues 186 to 191 (KTKPTQ) and Lys222 contribute to the UTP site. The Glutamine amidotransferase type-1 domain occupies 291–541 (TIAIVGKYTG…IEAATEQSRL (251 aa)). Gly353 provides a ligand contact to L-glutamine. Cys380 acts as the Nucleophile; for glutamine hydrolysis in catalysis. L-glutamine-binding positions include 381-384 (FGMQ), Glu404, and Arg469. Residues His514 and Glu516 contribute to the active site.

Belongs to the CTP synthase family. Homotetramer.

It catalyses the reaction UTP + L-glutamine + ATP + H2O = CTP + L-glutamate + ADP + phosphate + 2 H(+). The enzyme catalyses L-glutamine + H2O = L-glutamate + NH4(+). The catalysed reaction is UTP + NH4(+) + ATP = CTP + ADP + phosphate + 2 H(+). It functions in the pathway pyrimidine metabolism; CTP biosynthesis via de novo pathway; CTP from UDP: step 2/2. Allosterically activated by GTP, when glutamine is the substrate; GTP has no effect on the reaction when ammonia is the substrate. The allosteric effector GTP functions by stabilizing the protein conformation that binds the tetrahedral intermediate(s) formed during glutamine hydrolysis. Inhibited by the product CTP, via allosteric rather than competitive inhibition. In terms of biological role, catalyzes the ATP-dependent amination of UTP to CTP with either L-glutamine or ammonia as the source of nitrogen. Regulates intracellular CTP levels through interactions with the four ribonucleotide triphosphates. The chain is CTP synthase from Rhizobium johnstonii (strain DSM 114642 / LMG 32736 / 3841) (Rhizobium leguminosarum bv. viciae).